A 314-amino-acid polypeptide reads, in one-letter code: ATP synthase gamma chain (314 aa).

It belongs to the ATPase gamma chain family. As to quaternary structure, F-type ATPases have 2 components, CF(1) - the catalytic core - and CF(0) - the membrane proton channel. CF(1) has five subunits: alpha(3), beta(3), gamma(1), delta(1), epsilon(1). CF(0) has three main subunits: a, b and c.

The protein localises to the cell membrane. Its function is as follows. Produces ATP from ADP in the presence of a proton gradient across the membrane. The gamma chain is believed to be important in regulating ATPase activity and the flow of protons through the CF(0) complex. The protein is ATP synthase gamma chain of Limosilactobacillus reuteri (strain DSM 20016) (Lactobacillus reuteri).